The following is a 137-amino-acid chain: MEKTLSIIKPDAVKKGVIGQILTRFESNGLRIAATKKIQLSEKEAQEFYAVHKDRPFFKDLVEFMISGPVVVSVLEGKNAVLKNRELMGATNPKEAAAGTIRADFADSIDANAVHGSDSLENAKIEIEFFFSKTEIL.

Residues Lys-9, Phe-57, Arg-85, Thr-91, Arg-102, and Asn-112 each coordinate ATP. The active-site Pros-phosphohistidine intermediate is the His-115.

This sequence belongs to the NDK family. Homotetramer. The cofactor is Mg(2+).

The protein localises to the cytoplasm. It catalyses the reaction a 2'-deoxyribonucleoside 5'-diphosphate + ATP = a 2'-deoxyribonucleoside 5'-triphosphate + ADP. The catalysed reaction is a ribonucleoside 5'-diphosphate + ATP = a ribonucleoside 5'-triphosphate + ADP. Major role in the synthesis of nucleoside triphosphates other than ATP. The ATP gamma phosphate is transferred to the NDP beta phosphate via a ping-pong mechanism, using a phosphorylated active-site intermediate. The protein is Nucleoside diphosphate kinase of Campylobacter lari (strain RM2100 / D67 / ATCC BAA-1060).